Consider the following 303-residue polypeptide: ATP synthase gamma chain (303 aa).

Belongs to the ATPase gamma chain family. F-type ATPases have 2 components, CF(1) - the catalytic core - and CF(0) - the membrane proton channel. CF(1) has five subunits: alpha(3), beta(3), gamma(1), delta(1), epsilon(1). CF(0) has three main subunits: a, b and c.

The protein resides in the cell membrane. Its function is as follows. Produces ATP from ADP in the presence of a proton gradient across the membrane. The gamma chain is believed to be important in regulating ATPase activity and the flow of protons through the CF(0) complex. This chain is ATP synthase gamma chain, found in Nocardioides sp. (strain ATCC BAA-499 / JS614).